Here is a 282-residue protein sequence, read N- to C-terminus: NAD(P)H-hydrate epimerase (282 aa).

The N-terminal 53 residues, 1 to 53, are a transit peptide targeting the mitochondrion; it reads MSGLRTLLGLGLLVAGSRLPRVISQQSVCRARPIWWGTQRRGSETMAGAAVKY. At Ser-43 the chain carries Phosphoserine; by PKA. One can recognise a YjeF N-terminal domain in the interval 59 to 269; that stretch reads AQAVDQELFN…ALEKKYQLNL (211 aa). 113–117 lines the (6S)-NADPHX pocket; it reads NNGGD. Asn-114 contributes to the K(+) binding site. Lys-138 is modified (N6-succinyllysine). Asp-179 is a K(+) binding site. (6S)-NADPHX contacts are provided by residues 183-189 and Asp-212; that span reads GFSFKGD. Ser-215 provides a ligand contact to K(+).

It belongs to the NnrE/AIBP family. Homodimer. Interacts with APOA1 and APOA2. Requires K(+) as cofactor. Post-translationally, undergoes physiological phosphorylation during sperm capacitation, downstream to PKA activation. In terms of tissue distribution, detected in testis and sperm (at protein level). Expressed at high levels in heart, liver, kidney, and testis.

The protein resides in the mitochondrion. It localises to the secreted. It catalyses the reaction (6R)-NADHX = (6S)-NADHX. It carries out the reaction (6R)-NADPHX = (6S)-NADPHX. Its function is as follows. Catalyzes the epimerization of the S- and R-forms of NAD(P)HX, a damaged form of NAD(P)H that is a result of enzymatic or heat-dependent hydration. This is a prerequisite for the S-specific NAD(P)H-hydrate dehydratase to allow the repair of both epimers of NAD(P)HX. Accelerates cholesterol efflux from endothelial cells to high-density lipoprotein (HDL) and thereby regulates angiogenesis. The protein is NAD(P)H-hydrate epimerase of Mus musculus (Mouse).